The chain runs to 334 residues: Petrobactin import system permease protein FatD (334 aa).

The next 9 helical transmembrane spans lie at 24–44 (FIIAIIVVIILGIISLFTGVY), 64–84 (TVALMLTGAAMAMAGLVMQLI), 98–118 (IEWSSLGLLFVYLLFPAPTLV), 119–139 (QRMTGAIIFSFIGTMIFFLFL), 152–172 (IIGLMLGAVISAVSTFLGLLF), 197–217 (LWLIVIVTLLIFMYANRLTLA), 234–254 (IVLFGTALISVAVGIVAAVIG), 277–297 (SNLPWVCVIGMGTITACDIIS), and 304–324 (FELPVSLILASVGAVVFITIL).

It belongs to the binding-protein-dependent transport system permease family. FecCD subfamily. As to quaternary structure, the complex is composed of two ATP-binding proteins (FatE), two transmembrane proteins (FatC and FatD) and a solute-binding protein (FpuA).

It localises to the cell membrane. Part of an ABC transporter complex involved in ferric-petrobactin uptake. Probably responsible for the translocation of the substrate across the membrane. The polypeptide is Petrobactin import system permease protein FatD (Bacillus anthracis).